A 210-amino-acid polypeptide reads, in one-letter code: Putative biopolymer transport protein ExbB-like 3 (210 aa).

The next 3 helical transmembrane spans lie at 2 to 22 (AGGI…ALII), 104 to 124 (LFQT…ILGL), and 152 to 172 (LVST…ANVF).

This sequence belongs to the ExbB/TolQ family.

It localises to the cell inner membrane. Functionally, involved in the TonB-dependent energy-dependent transport of various receptor-bound substrates. Protects ExbD from proteolytic degradation and functionally stabilizes TonB. The chain is Putative biopolymer transport protein ExbB-like 3 from Synechocystis sp. (strain ATCC 27184 / PCC 6803 / Kazusa).